The following is a 155-amino-acid chain: Ribosomal RNA large subunit methyltransferase H (155 aa).

S-adenosyl-L-methionine contacts are provided by residues Leu72, Gly103, and 122 to 127 (LSPLTL).

It belongs to the RNA methyltransferase RlmH family. As to quaternary structure, homodimer.

The protein localises to the cytoplasm. It carries out the reaction pseudouridine(1915) in 23S rRNA + S-adenosyl-L-methionine = N(3)-methylpseudouridine(1915) in 23S rRNA + S-adenosyl-L-homocysteine + H(+). Its function is as follows. Specifically methylates the pseudouridine at position 1915 (m3Psi1915) in 23S rRNA. This chain is Ribosomal RNA large subunit methyltransferase H, found in Haemophilus influenzae (strain PittEE).